A 500-amino-acid chain; its full sequence is Probable cytosol aminopeptidase (500 aa).

Positions 268 and 273 each coordinate Mn(2+). The active site involves Lys280. Residues Asp291, Asp350, and Glu352 each coordinate Mn(2+). Residue Arg354 is part of the active site.

Belongs to the peptidase M17 family. Requires Mn(2+) as cofactor.

It is found in the cytoplasm. It catalyses the reaction Release of an N-terminal amino acid, Xaa-|-Yaa-, in which Xaa is preferably Leu, but may be other amino acids including Pro although not Arg or Lys, and Yaa may be Pro. Amino acid amides and methyl esters are also readily hydrolyzed, but rates on arylamides are exceedingly low.. The enzyme catalyses Release of an N-terminal amino acid, preferentially leucine, but not glutamic or aspartic acids.. Functionally, presumably involved in the processing and regular turnover of intracellular proteins. Catalyzes the removal of unsubstituted N-terminal amino acids from various peptides. This chain is Probable cytosol aminopeptidase, found in Aromatoleum aromaticum (strain DSM 19018 / LMG 30748 / EbN1) (Azoarcus sp. (strain EbN1)).